The chain runs to 315 residues: Ester hydrolase C11orf54 homolog (315 aa).

His-266, His-268, and His-278 together coordinate Zn(2+).

In terms of assembly, monomer. It depends on Zn(2+) as a cofactor.

Its subcellular location is the nucleus. It localises to the cytoplasm. Exhibits ester hydrolase activity on the substrate p-nitrophenyl acetate, in vitro. Regulates DNA damage and repair by regulating HIF1A degradation via chaperone-mediated autophagy (CMA). The chain is Ester hydrolase C11orf54 homolog from Mus musculus (Mouse).